We begin with the raw amino-acid sequence, 179 residues long: ATP synthase subunit delta (179 aa).

The protein belongs to the ATPase delta chain family. As to quaternary structure, F-type ATPases have 2 components, F(1) - the catalytic core - and F(0) - the membrane proton channel. F(1) has five subunits: alpha(3), beta(3), gamma(1), delta(1), epsilon(1). F(0) has three main subunits: a(1), b(2) and c(10-14). The alpha and beta chains form an alternating ring which encloses part of the gamma chain. F(1) is attached to F(0) by a central stalk formed by the gamma and epsilon chains, while a peripheral stalk is formed by the delta and b chains.

The protein resides in the cell membrane. Functionally, f(1)F(0) ATP synthase produces ATP from ADP in the presence of a proton or sodium gradient. F-type ATPases consist of two structural domains, F(1) containing the extramembraneous catalytic core and F(0) containing the membrane proton channel, linked together by a central stalk and a peripheral stalk. During catalysis, ATP synthesis in the catalytic domain of F(1) is coupled via a rotary mechanism of the central stalk subunits to proton translocation. In terms of biological role, this protein is part of the stalk that links CF(0) to CF(1). It either transmits conformational changes from CF(0) to CF(1) or is implicated in proton conduction. In Bacillus sp. (strain PS3), this protein is ATP synthase subunit delta.